The primary structure comprises 246 residues: DNA repair protein RecO (246 aa).

The protein belongs to the RecO family.

Its function is as follows. Involved in DNA repair and RecF pathway recombination. This is DNA repair protein RecO from Alkaliphilus metalliredigens (strain QYMF).